We begin with the raw amino-acid sequence, 77 residues long: EMBRYO SURROUNDING FACTOR 1-like protein 9 (77 aa).

The signal sequence occupies residues methionine 1–cysteine 22. Intrachain disulfides connect cysteine 38/cysteine 54, cysteine 43/cysteine 75, cysteine 52/cysteine 71, and cysteine 55/cysteine 64.

It belongs to the MEG family. As to expression, expressed in flowers.

The protein is EMBRYO SURROUNDING FACTOR 1-like protein 9 (ESFL9) of Arabidopsis thaliana (Mouse-ear cress).